The chain runs to 208 residues: FMN-dependent NADH:quinone oxidoreductase 1 (208 aa).

17–19 (SVS) provides a ligand contact to FMN.

This sequence belongs to the azoreductase type 1 family. In terms of assembly, homodimer. FMN is required as a cofactor.

It carries out the reaction 2 a quinone + NADH + H(+) = 2 a 1,4-benzosemiquinone + NAD(+). It catalyses the reaction N,N-dimethyl-1,4-phenylenediamine + anthranilate + 2 NAD(+) = 2-(4-dimethylaminophenyl)diazenylbenzoate + 2 NADH + 2 H(+). Quinone reductase that provides resistance to thiol-specific stress caused by electrophilic quinones. Its function is as follows. Also exhibits azoreductase activity. Catalyzes the reductive cleavage of the azo bond in aromatic azo compounds to the corresponding amines. This is FMN-dependent NADH:quinone oxidoreductase 1 from Listeria innocua serovar 6a (strain ATCC BAA-680 / CLIP 11262).